Here is a 371-residue protein sequence, read N- to C-terminus: Chaperone protein DnaJ (371 aa).

The 66-residue stretch at 6 to 71 (DYYEILGVEK…QKRAQYDRFG (66 aa)) folds into the J domain. The segment at 104–123 (GGMGGQQRQRRNRNEPRRGS) is disordered. The CR-type zinc-finger motif lies at 139 to 217 (GIEKEIEFDT…CKGKGRVAEH (79 aa)). Residues C152, C155, C169, C172, C191, C194, C205, and C208 each coordinate Zn(2+). CXXCXGXG motif repeat units lie at residues 152-159 (CDECKGTG), 169-176 (CGTCGGSG), 191-198 (CPTCHGQG), and 205-212 (CKPCKGKG).

Belongs to the DnaJ family. Homodimer. The cofactor is Zn(2+).

The protein resides in the cytoplasm. In terms of biological role, participates actively in the response to hyperosmotic and heat shock by preventing the aggregation of stress-denatured proteins and by disaggregating proteins, also in an autonomous, DnaK-independent fashion. Unfolded proteins bind initially to DnaJ; upon interaction with the DnaJ-bound protein, DnaK hydrolyzes its bound ATP, resulting in the formation of a stable complex. GrpE releases ADP from DnaK; ATP binding to DnaK triggers the release of the substrate protein, thus completing the reaction cycle. Several rounds of ATP-dependent interactions between DnaJ, DnaK and GrpE are required for fully efficient folding. Also involved, together with DnaK and GrpE, in the DNA replication of plasmids through activation of initiation proteins. This chain is Chaperone protein DnaJ, found in Bdellovibrio bacteriovorus (strain ATCC 15356 / DSM 50701 / NCIMB 9529 / HD100).